We begin with the raw amino-acid sequence, 265 residues long: Ribonuclease 3 (265 aa).

The 124-residue stretch at L34–Q157 folds into the RNase III domain. E70 provides a ligand contact to Mg(2+). D74 is an active-site residue. 2 residues coordinate Mg(2+): D143 and E146. Residue E146 is part of the active site. Positions D185 to K256 constitute a DRBM domain.

This sequence belongs to the ribonuclease III family. In terms of assembly, homodimer. Requires Mg(2+) as cofactor.

It localises to the cytoplasm. The catalysed reaction is Endonucleolytic cleavage to 5'-phosphomonoester.. Its function is as follows. Digests double-stranded RNA. Involved in the processing of primary rRNA transcript to yield the immediate precursors to the large and small rRNAs (23S and 16S). Processes some mRNAs, and tRNAs when they are encoded in the rRNA operon. Processes pre-crRNA and tracrRNA of type II CRISPR loci if present in the organism. The chain is Ribonuclease 3 from Psychrobacter arcticus (strain DSM 17307 / VKM B-2377 / 273-4).